The following is a 298-amino-acid chain: Elongation factor Ts (298 aa).

Positions 80 to 83 (TDFV) are involved in Mg(2+) ion dislocation from EF-Tu.

This sequence belongs to the EF-Ts family.

It localises to the cytoplasm. Associates with the EF-Tu.GDP complex and induces the exchange of GDP to GTP. It remains bound to the aminoacyl-tRNA.EF-Tu.GTP complex up to the GTP hydrolysis stage on the ribosome. The sequence is that of Elongation factor Ts from Paracidovorax citrulli (strain AAC00-1) (Acidovorax citrulli).